The chain runs to 41 residues: Phospholipase A2 homolog nigroviriditoxin acidic subunit A (41 aa).

It belongs to the phospholipase A2 family. Group II subfamily. D49 sub-subfamily. As to quaternary structure, nigroviriditoxin is a heterodimer of an acidic subunit A and a basic subunit B. In terms of tissue distribution, expressed by the venom gland.

It is found in the secreted. Heterodimer A-B: Nigroviriditoxin possesses phospholipase A2 (PLA2) activity. It consists of a non-covalent association of a basic PLA2 subunit B with a non-enzymatic subunit A. In terms of biological role, subunit A: The acidic subunit of nigroviriditoxin probably is a heterotrimer of three disulfide-linked chains generated by post-translational maturation of a PLA2-like precursor. It appears to have no PLA2 activity of its own, instead inhibiting the catalytic activity of subunit B. It is not toxic to mice by itself but increases toxicity of subunit B. This Bothriechis nigroviridis (Black-speckled palm pit viper) protein is Phospholipase A2 homolog nigroviriditoxin acidic subunit A.